Consider the following 91-residue polypeptide: Hepcidin-2 (91 aa).

The N-terminal stretch at 1–24 (MKLSNVFLAAVVILTCVCVFQITA) is a signal peptide. The propeptide occupies 25–64 (VPFIQQVQDEHHVESEELQENQHLTEAEHRLTDPLVLFRT). Disulfide bonds link Cys73–Cys89, Cys76–Cys79, Cys77–Cys85, and Cys80–Cys88.

This sequence belongs to the hepcidin family.

It localises to the secreted. Its function is as follows. Seems to act as a signaling molecule involved in the maintenance of iron homeostasis. Seems to be required in conjunction with HFE to regulate both intestinal iron absorption and iron storage in macrophages. May also have antimicrobial activity. The polypeptide is Hepcidin-2 (hamp2) (Danio rerio (Zebrafish)).